We begin with the raw amino-acid sequence, 312 residues long: TATA box-binding protein-like 2 (312 aa).

Residues 65–115 are disordered; that stretch reads DELSTQDEPSQVEKESKNEDSGIYTDCPQKESTQADIDTSNSAQNTSQFNL. Over residues 75-84 the composition is skewed to basic and acidic residues; that stretch reads QVEKESKNED. Over residues 94-115 the composition is skewed to polar residues; that stretch reads KESTQADIDTSNSAQNTSQFNL.

The protein belongs to the TBP family. In adults, expressed in the gonads, with expression much higher in the ovary than the testis (at protein level). Shows a small amount of expression in other adult organs, including the brain and kidney. Embryonic expression is mostly ubiquitous except in early gastrula embryos where expression is asymmetric.

It is found in the nucleus. In terms of biological role, TATA box-binding transcription factor. Members of the TBP family are differentially required to regulate transcription and development during early embryogenesis. Commits mesoderm to the hematopoietic lineage during hemopoiesis, acting via mespa. Binds to the mespa promoter. This is TATA box-binding protein-like 2 from Danio rerio (Zebrafish).